We begin with the raw amino-acid sequence, 502 residues long: ATP synthase subunit alpha (502 aa).

169–176 contributes to the ATP binding site; the sequence is GDRQTGKT.

This sequence belongs to the ATPase alpha/beta chains family. In terms of assembly, F-type ATPases have 2 components, CF(1) - the catalytic core - and CF(0) - the membrane proton channel. CF(1) has five subunits: alpha(3), beta(3), gamma(1), delta(1), epsilon(1). CF(0) has three main subunits: a(1), b(2) and c(9-12). The alpha and beta chains form an alternating ring which encloses part of the gamma chain. CF(1) is attached to CF(0) by a central stalk formed by the gamma and epsilon chains, while a peripheral stalk is formed by the delta and b chains. The F(1)F(0) complex interacts with SpoIIIJ and YqjG; YqgA is found in the same complex.

The protein resides in the cell membrane. Its subcellular location is the membrane raft. The catalysed reaction is ATP + H2O + 4 H(+)(in) = ADP + phosphate + 5 H(+)(out). Its function is as follows. Produces ATP from ADP in the presence of a proton gradient across the membrane. The alpha chain is a regulatory subunit. The protein is ATP synthase subunit alpha of Bacillus subtilis (strain 168).